The sequence spans 132 residues: Small ribosomal subunit protein uS8 (132 aa).

Belongs to the universal ribosomal protein uS8 family. As to quaternary structure, part of the 30S ribosomal subunit. Contacts proteins S5 and S12.

One of the primary rRNA binding proteins, it binds directly to 16S rRNA central domain where it helps coordinate assembly of the platform of the 30S subunit. The polypeptide is Small ribosomal subunit protein uS8 (Streptococcus sanguinis (strain SK36)).